The primary structure comprises 187 residues: Protein P18, mitochondrial (187 aa).

Residues 1-17 (MRRLSSQLMCTAAAVRF) constitute a mitochondrion transit peptide. The tract at residues 160–187 (NAAKAKADGKEHPSTLAQQQSLFDIKIQ) is disordered.

The protein resides in the mitochondrion inner membrane. Putative RNA-binding protein. This is Protein P18, mitochondrial from Leishmania tarentolae (Sauroleishmania tarentolae).